We begin with the raw amino-acid sequence, 460 residues long: Citrate synthase, peroxisomal (460 aa).

S21 bears the Phosphoserine mark. Residues K218 and K239 each participate in a glycyl lysine isopeptide (Lys-Gly) (interchain with G-Cter in ubiquitin) cross-link. Catalysis depends on residues H293 and H339. Glycyl lysine isopeptide (Lys-Gly) (interchain with G-Cter in ubiquitin) cross-links involve residues K354 and K385. Residue D394 is part of the active site. Residues 458–460 (SKL) carry the C-terminal peroxisome targeting signal (PTS1) motif.

Belongs to the citrate synthase family. As to quaternary structure, interacts with F-box protein UCC1. In terms of processing, ubiquitinated by the E3 ubiquitin-protein ligase complex SCF(UCC1), which leads to its degradation by the proteasome. Ubiquitination is prevented by oxaloacetate, suggesting the existence of an oxaloacetate-dependent positive feedback loop that stabilizes CIT2.

The protein localises to the cytoplasm. The protein resides in the peroxisome. The catalysed reaction is oxaloacetate + acetyl-CoA + H2O = citrate + CoA + H(+). It functions in the pathway carbohydrate metabolism; tricarboxylic acid cycle; isocitrate from oxaloacetate: step 1/2. Functionally, peroxisomal citrate synthase involved in the citrate homeostasis. Catalyzes the condensation of acetyl coenzyme A and oxaloacetate to form citrate. Citrate synthase is the rate-limiting enzyme of the tricarboxylic acid (TCA) cycle. This is Citrate synthase, peroxisomal from Saccharomyces cerevisiae (strain ATCC 204508 / S288c) (Baker's yeast).